A 222-amino-acid chain; its full sequence is Cell division protein FtsQ (222 aa).

Residues 1–5 (MNKKV) lie on the Cytoplasmic side of the membrane. A helical transmembrane segment spans residues 6–26 (IAIVVGVVVVLVAILGVVAWF). Residues 27 to 222 (VPILKVGNIE…ISSPSMVTVR (196 aa)) lie on the Extracellular side of the membrane. The region spanning 30–98 (LKVGNIEVTG…STITVELTER (69 aa)) is the POTRA domain.

Belongs to the FtsQ/DivIB family. FtsQ subfamily.

It is found in the cell membrane. In terms of biological role, essential cell division protein. The chain is Cell division protein FtsQ from Corynebacterium glutamicum (strain ATCC 13032 / DSM 20300 / JCM 1318 / BCRC 11384 / CCUG 27702 / LMG 3730 / NBRC 12168 / NCIMB 10025 / NRRL B-2784 / 534).